The following is a 267-amino-acid chain: NAD kinase 2 (267 aa).

Residue Asp-52 is the Proton acceptor of the active site. Residues 52–53 (DA), 124–125 (NE), Arg-151, Asp-153, 164–169 (TAYNKS), and Ala-188 contribute to the NAD(+) site.

The protein belongs to the NAD kinase family. The cofactor is a divalent metal cation.

The protein localises to the cytoplasm. It catalyses the reaction NAD(+) + ATP = ADP + NADP(+) + H(+). In terms of biological role, involved in the regulation of the intracellular balance of NAD and NADP, and is a key enzyme in the biosynthesis of NADP. Catalyzes specifically the phosphorylation on 2'-hydroxyl of the adenosine moiety of NAD to yield NADP. This Bacillus anthracis protein is NAD kinase 2.